A 184-amino-acid chain; its full sequence is Probable DNA-directed RNA polymerase subunit delta (184 aa).

The HTH HARE-type domain occupies 14 to 82 (KSFIDMAHTL…GENNWGLRDW (69 aa)). Positions 114 to 184 (LLGEEEEEID…FNDDPDDDKI (71 aa)) are disordered. Positions 117–184 (EEEEEIDDQE…FNDDPDDDKI (68 aa)) are enriched in acidic residues.

Belongs to the RpoE family. In terms of assembly, RNAP is composed of a core of 2 alpha, a beta and a beta' subunits. The core is associated with a delta subunit and one of several sigma factors.

Functionally, participates in both the initiation and recycling phases of transcription. In the presence of the delta subunit, RNAP displays an increased specificity of transcription, a decreased affinity for nucleic acids, and an increased efficiency of RNA synthesis because of enhanced recycling. The chain is Probable DNA-directed RNA polymerase subunit delta from Staphylococcus carnosus (strain TM300).